Consider the following 1008-residue polypeptide: Phytosulfokine receptor 1 (1008 aa).

Residues 1-25 (MRVHRFCVIVIFLTELLCFFYSSES) form the signal peptide. 3 N-linked (GlcNAc...) asparagine glycosylation sites follow: Asn-55, Asn-64, and Asn-73. LRR repeat units follow at residues 75–98 (TGRV…SLGK), 99–123 (LDEI…IFNL), 124–148 (KNLQ…NLPA), 150–170 (QSFD…ICHN), 172–194 (TQIR…GFGK), 195–219 (CVLL…LFHL), 221–243 (RLNL…IRNL), 244–266 (SSLV…VFDE), 291–315 (SPSL…CTAM), 316–339 (IALN…LPDC), 341–362 (RLKN…SFKN), and 363–387 (FESL…GILQ). Residue Asn-106 is glycosylated (N-linked (GlcNAc...) asparagine). N-linked (GlcNAc...) asparagine glycans are attached at residues Asn-160, Asn-170, and Asn-187. Asn-242 carries N-linked (GlcNAc...) asparagine glycosylation. A phytosulfokine-binding site is contributed by Arg-300. Asn-301 and Asn-311 each carry an N-linked (GlcNAc...) asparagine glycan. 3 residues coordinate phytosulfokine: Asn-346, Ser-370, and Ser-372. Residues Asn-373, Asn-378, and Asn-391 are each glycosylated (N-linked (GlcNAc...) asparagine). 4 LRR repeats span residues 392–414 (LTTL…SLHF), 415–438 (EKLK…LSSS), 439–464 (NELQ…DFKA), and 466–486 (FYLD…LTKL). Phytosulfokine-binding residues include Thr-398, Asn-424, and Asp-445. 2 N-linked (GlcNAc...) asparagine glycosylation sites follow: Asn-472 and Asn-493. Lys-508 provides a ligand contact to phytosulfokine. Residues Asn-510 and Asn-534 are each glycosylated (N-linked (GlcNAc...) asparagine). 4 LRR repeats span residues 521 to 545 (IFGF…EFGN), 546 to 570 (LKKL…LSGM), 571 to 594 (TSLE…LQQL), and 596 to 619 (FLSK…QFQT). 2 N-linked (GlcNAc...) asparagine glycosylation sites follow: Asn-606 and Asn-622. The helical transmembrane segment at 660 to 680 (MAIGIAFGSVFLLTLLSLIVL) threads the bilayer. Thr-731 carries the phosphothreonine modification. The 272-residue stretch at 734–1005 (FDQANIIGCG…PTTQQLVSWL (272 aa)) folds into the Protein kinase domain. ATP contacts are provided by residues 740–748 (IGCGGFGMV) and Lys-762. 2 positions are modified to phosphotyrosine: Tyr-807 and Tyr-847. The active-site Proton acceptor is Asp-860. Tyr-902 carries the phosphotyrosine modification.

It belongs to the protein kinase superfamily. Ser/Thr protein kinase family. In terms of assembly, homo- and heterodimers with PSY1R. Heterodimers with the somatic embryogenesis receptor-like kinases (SERKs). PSK is not directly involved in PSKR-SERK interaction but stabilizes PSKR island domain for recruitment of a SERK. Part of a functional complex containing PSKR1, BAK1, CNGC17, and AHA. Interacts with AHA1, AHA2, and BAK1, but not with CNGC17 or BRI1. Requires Mg(2+) as cofactor. Mn(2+) is required as a cofactor. Weakly expressed in roots, leaves, stems and flowers. Expressed in the primary and lateral roots, including root primordia and root tips, but not in the hypocotyl.

It localises to the cell membrane. It catalyses the reaction L-seryl-[protein] + ATP = O-phospho-L-seryl-[protein] + ADP + H(+). The catalysed reaction is L-threonyl-[protein] + ATP = O-phospho-L-threonyl-[protein] + ADP + H(+). The enzyme catalyses GTP = 3',5'-cyclic GMP + diphosphate. With respect to regulation, cGMP suppresses kinase activity. Phytosulfokine receptor with both a serine/threonine-protein kinase activity and a guanylate cyclase activity. Regulates, in response to phytosulfokine binding, a signaling cascade involved in plant cell differentiation, organogenesis, somatic embryogenesis, cellular proliferation and plant growth. Involved in plant immunity, with antagonistic effects on bacterial and fungal resistances. Not involved in PSY perception. CNGC17 and AHAs form a functional cation-translocating unit that is activated by PSKR1/BAK1 and possibly other BAK1/RLK complexes. The polypeptide is Phytosulfokine receptor 1 (Arabidopsis thaliana (Mouse-ear cress)).